The chain runs to 423 residues: Large ribosomal subunit protein mL37 (423 aa).

A mitochondrion-targeting transit peptide spans 1 to 29 (MALASGPALRALAGSGRLGLGGYGTPKRG).

This sequence belongs to the mitochondrion-specific ribosomal protein mL37 family. Component of the mitochondrial ribosome large subunit (39S) which comprises a 16S rRNA and about 50 distinct proteins.

The protein resides in the mitochondrion. The sequence is that of Large ribosomal subunit protein mL37 (Mrpl37) from Mus musculus (Mouse).